We begin with the raw amino-acid sequence, 179 residues long: uncharacterized protein (179 aa).

This is an uncharacterized protein from Pasteurella multocida (strain Pm70).